The primary structure comprises 263 residues: UPF0739 protein C1orf74 homolog (263 aa).

Belongs to the UPF0739 family.

The protein is UPF0739 protein C1orf74 homolog of Mus musculus (Mouse).